Reading from the N-terminus, the 200-residue chain is Ras-related protein Rab-7b (200 aa).

Residues 15-22 (GALGVGKT), 34-40 (YEDYQTT), 63-67 (DTGGQ), 124-127 (NKID), and 154-155 (AK) each bind GTP. 2 consecutive short sequence motifs (switch) follow at residues 28–41 (YVHK…QTTL) and 67–82 (QERF…KGSD). Position 186 is a phosphoserine (Ser186). 2 S-geranylgeranyl cysteine lipidation sites follow: Cys199 and Cys200.

It belongs to the small GTPase superfamily. Rab family.

The protein localises to the late endosome. It localises to the lysosome. Its subcellular location is the golgi apparatus. It is found in the trans-Golgi network. The protein resides in the cytoplasmic vesicle. The protein localises to the phagosome. It localises to the phagosome membrane. Its function is as follows. Controls vesicular trafficking from endosomes to the trans-Golgi network (TGN). Acts as a negative regulator of TLR9 signaling and can suppress TLR9-triggered TNFA, IL6, and IFNB production in macrophages by promoting TLR9 lysosomal degradation. Also negatively regulates TLR4 signaling in macrophages by promoting lysosomal degradation of TLR4. Promotes megakaryocytic differentiation by increasing NF-kappa-B-dependent IL6 production and subsequently enhancing the association of STAT3 with GATA1. Not involved in the regulation of the EGF- and EGFR degradation pathway. This chain is Ras-related protein Rab-7b (RAB7B), found in Bos taurus (Bovine).